Consider the following 360-residue polypeptide: tRNA/tmRNA (uracil-C(5))-methyltransferase (360 aa).

S-adenosyl-L-methionine contacts are provided by Gln185, Tyr213, Asn218, Glu234, and Asp294. Cys319 serves as the catalytic Nucleophile. Glu353 serves as the catalytic Proton acceptor.

It belongs to the class I-like SAM-binding methyltransferase superfamily. RNA M5U methyltransferase family. TrmA subfamily.

The enzyme catalyses uridine(54) in tRNA + S-adenosyl-L-methionine = 5-methyluridine(54) in tRNA + S-adenosyl-L-homocysteine + H(+). The catalysed reaction is uridine(341) in tmRNA + S-adenosyl-L-methionine = 5-methyluridine(341) in tmRNA + S-adenosyl-L-homocysteine + H(+). Functionally, dual-specificity methyltransferase that catalyzes the formation of 5-methyluridine at position 54 (m5U54) in all tRNAs, and that of position 341 (m5U341) in tmRNA (transfer-mRNA). The chain is tRNA/tmRNA (uracil-C(5))-methyltransferase from Nitratiruptor sp. (strain SB155-2).